Consider the following 388-residue polypeptide: MKFVDEAVIRVEAGDGGSGCVSFRREKYIPDGGPDGGDGGDGGSVYLEADENFNTLIEYRFERFHMAERGENGRGRDCTGHSGKDLILKVPVGTRAIDHDTEEVLGDLTTHGQKLLVAKGGFHGLGNTRFKSSTNRAPRQKTLGTPGEVRSLKLELLLLADVGLLGMPNAGKSTFIRAVSRATPKVADYPFTTLVPNLGVVNPRPGQSYVIADIPGLIEGAAEGAGLGIRFLKHLERCRILLHIIDIEPIDGTDPVDSARAIVGELEKYSPKLASKPRWLVFNKADLLLEDELKEKAERVVKELGWEGEVYTISAYGRDGTKELAAKLWDFIQSLPPEDKDANPEDEVEFKWDNYHQANIDAINEDYDDDFDDDFDDDDYDVEVIYQR.

In terms of domain architecture, Obg spans 1–159 (MKFVDEAVIR…RSLKLELLLL (159 aa)). One can recognise an OBG-type G domain in the interval 160 to 333 (ADVGLLGMPN…LAAKLWDFIQ (174 aa)). GTP-binding positions include 166-173 (GMPNAGKS), 191-195 (FTTLV), 213-216 (DIPG), 283-286 (NKAD), and 314-316 (SAY). Positions 173 and 193 each coordinate Mg(2+).

Belongs to the TRAFAC class OBG-HflX-like GTPase superfamily. OBG GTPase family. Monomer. Requires Mg(2+) as cofactor.

It is found in the cytoplasm. In terms of biological role, an essential GTPase which binds GTP, GDP and possibly (p)ppGpp with moderate affinity, with high nucleotide exchange rates and a fairly low GTP hydrolysis rate. Plays a role in control of the cell cycle, stress response, ribosome biogenesis and in those bacteria that undergo differentiation, in morphogenesis control. This is GTPase Obg from Shewanella oneidensis (strain ATCC 700550 / JCM 31522 / CIP 106686 / LMG 19005 / NCIMB 14063 / MR-1).